Reading from the N-terminus, the 72-residue chain is MAKEDCIEMQGTILETLPNTMFRVELENGHVVTAHISGKMRKNYIRILTGDKVTVEMTPYDLSKARIIFRAR.

The S1-like domain maps to 1–72 (MAKEDCIEMQ…SKARIIFRAR (72 aa)).

It belongs to the IF-1 family. In terms of assembly, component of the 30S ribosomal translation pre-initiation complex which assembles on the 30S ribosome in the order IF-2 and IF-3, IF-1 and N-formylmethionyl-tRNA(fMet); mRNA recruitment can occur at any time during PIC assembly.

It localises to the cytoplasm. Its function is as follows. One of the essential components for the initiation of protein synthesis. Stabilizes the binding of IF-2 and IF-3 on the 30S subunit to which N-formylmethionyl-tRNA(fMet) subsequently binds. Helps modulate mRNA selection, yielding the 30S pre-initiation complex (PIC). Upon addition of the 50S ribosomal subunit IF-1, IF-2 and IF-3 are released leaving the mature 70S translation initiation complex. The polypeptide is Translation initiation factor IF-1 (Actinobacillus pleuropneumoniae serotype 5b (strain L20)).